Here is a 474-residue protein sequence, read N- to C-terminus: MIEIQFYNSLSGKKEKFSPANPHRVTVYSCGPTVYNFAHIGNLRAFLFVDVLRRSLKLLGYGVDMTMNITDIDDKIIRDSIASQKSIQEFTTPWTEAFFEDLKTVSAEFLEHYPKATESIPEMIQIIQRLQNQGLVYEKDENLYFSIQKFEGYGKLSKIDTSGMKTGTRYDTDEYDKEDVRDFVLWKSPKRKGEASWKTSVGTGRPGWHLECSAMIRKIYGSGVDIHTGGVDLLFPHHENEIAQSEGAFPEESFVRTWLHSEHLLVEGQKMSKSKGNFYTLRDLVGQGLDPKAIRFLLISAHYRSKLNFSTDRIAEASANIRKIQNCLDRLLDIAQNVKIDPSYSFNDELTLRWKKEFEESLADDLNVSKALAVVFESLKTINAFLDSKKNRVAEISANEFIQILAYYDRIFGVLNFESQKDPLIDSEIDSLIQERQTARKNKDFARSDAIRDQLLAQGILIEDTKDGIRWRRK.

C30 contributes to the Zn(2+) binding site. Positions P32–N42 match the 'HIGH' region motif. Residues C212, H237, and E241 each contribute to the Zn(2+) site. The short motif at K270–S274 is the 'KMSKS' region element. Residue K273 coordinates ATP.

This sequence belongs to the class-I aminoacyl-tRNA synthetase family. In terms of assembly, monomer. Requires Zn(2+) as cofactor.

It localises to the cytoplasm. The catalysed reaction is tRNA(Cys) + L-cysteine + ATP = L-cysteinyl-tRNA(Cys) + AMP + diphosphate. This Leptospira borgpetersenii serovar Hardjo-bovis (strain JB197) protein is Cysteine--tRNA ligase.